The primary structure comprises 431 residues: Methionine aminopeptidase 2-2 (431 aa).

The interval M1–F76 is disordered. Residues E35 to D47 show a composition bias toward acidic residues. H184 provides a ligand contact to substrate. Residues D204, D215, and H284 each coordinate a divalent metal cation. H292 provides a ligand contact to substrate. A divalent metal cation contacts are provided by E317 and E412.

Belongs to the peptidase M24A family. Methionine aminopeptidase eukaryotic type 2 subfamily. Co(2+) serves as cofactor. Requires Zn(2+) as cofactor. It depends on Mn(2+) as a cofactor. The cofactor is Fe(2+).

It localises to the cytoplasm. It catalyses the reaction Release of N-terminal amino acids, preferentially methionine, from peptides and arylamides.. In terms of biological role, cotranslationally removes the N-terminal methionine from nascent proteins. The N-terminal methionine is often cleaved when the second residue in the primary sequence is small and uncharged (Met-Ala-, Cys, Gly, Pro, Ser, Thr, or Val). The sequence is that of Methionine aminopeptidase 2-2 from Aspergillus niger (strain ATCC MYA-4892 / CBS 513.88 / FGSC A1513).